Reading from the N-terminus, the 785-residue chain is uncharacterized protein (785 aa).

Over residues 53–65 (KNTLTGSHGSNDL) the composition is skewed to polar residues. The tract at residues 53–162 (KNTLTGSHGS…RKAADEQGPI (110 aa)) is disordered. The segment covering 66–79 (ATDESLDSPEDEEA) has biased composition (acidic residues). Polar residues predominate over residues 81-94 (SPLQLGTPTSTTSG). S215 is modified (phosphoserine). 2 disordered regions span residues 571-590 (KVVD…TSVN) and 631-657 (DSSG…RIQF). Over residues 575-584 (SDDEESDSDE) the composition is skewed to acidic residues. At S667 the chain carries Phosphoserine. The interval 693-785 (DPKMKFTSHP…FGSIFKKVFG (93 aa)) is disordered. Basic residues predominate over residues 725–739 (RKAHHHHHHHNHVSR). Residues 776–785 (FGSIFKKVFG) are compositionally biased toward low complexity.

This is an uncharacterized protein from Saccharomyces cerevisiae (strain ATCC 204508 / S288c) (Baker's yeast).